Consider the following 165-residue polypeptide: Putative ankyrin repeat domain-containing protein 20A5 (165 aa).

3 ANK repeats span residues 66–95 (QHRT…QIDI), 99–128 (ENRT…NPNL), and 132–161 (YGNT…NIEA).

This Homo sapiens (Human) protein is Putative ankyrin repeat domain-containing protein 20A5 (ANKRD20A5P).